Here is a 279-residue protein sequence, read N- to C-terminus: Replication protein A 32 kDa subunit A (279 aa).

Residues 1 to 33 are disordered; sequence MFSSSQFEPNSGFSGGGFMSSQPSQAYESSSST. The segment covering 19–32 has biased composition (low complexity); the sequence is MSSQPSQAYESSSS. Residues 73–148 constitute a DNA-binding region (OB); sequence VSLVGLVCDK…QLLVFSVRPI (76 aa).

This sequence belongs to the replication factor A protein 2 family. Heterotrimer of RPA1, RPA2 and RPA3 (canonical replication protein A complex). Interacts with ROS1. Binds to ASE1/At3g02920, PDX2, At5g62350, RPA1A/At2g06510, ARF1/At1g10630, At4g18590 and At3g52630. In terms of processing, phosphorylated in a cell-cycle-dependent manner (from the S phase until mitosis). In response to DNA damage, recruited to DNA-repair nuclear foci, as a hypophosphorylated form. In terms of tissue distribution, strongly expressed in shoot and root meristems. Present in seedlings, roots, leaves, siliques and flowers.

It localises to the nucleus. In terms of biological role, component of the replication protein A complex (RPA) required for DNA recombination, repair and replication. The activity of RPA is mediated by single-stranded DNA binding and protein interactions. Required fo cell division in meristems. Involved in the maintenance of transcriptional epigenetic gene silencing (TGS) at specific loci (including some transposons) by regulating histone H3 acetylation, 'Lys-4' and 'Lys-9' methylation. The sequence is that of Replication protein A 32 kDa subunit A (RPA2A) from Arabidopsis thaliana (Mouse-ear cress).